A 356-amino-acid chain; its full sequence is Serine/threonine-protein phosphatase 4 regulatory subunit 2 (356 aa).

Over residues 202 to 240 the composition is skewed to acidic residues; the sequence is NEGAGDDEDDDQDYVDEDSATSEDEEEDVEEEEEEEGPE. The segment at 202-335 is disordered; it reads NEGAGDDEDD…PQLTTSATNV (134 aa). Residues 326–335 are compositionally biased toward polar residues; it reads PQLTTSATNV.

This sequence belongs to the PPP4R2 family. Regulatory subunit (R2) of the histone H2A phosphatase complex (HTP-C) consisting of PPH3, PSY2 and PSY4.

The protein localises to the nucleus. Functionally, regulatory subunit of the histone H2A phosphatase complex, which dephosphorylates H2AS128ph (gamma-H2A) that has been displaced from sites of DNA lesions in the double-stranded DNA break repair process. Dephosphorylation is necessary for efficient recovery from the DNA damage checkpoint. This chain is Serine/threonine-protein phosphatase 4 regulatory subunit 2 (PSY4), found in Eremothecium gossypii (strain ATCC 10895 / CBS 109.51 / FGSC 9923 / NRRL Y-1056) (Yeast).